The chain runs to 192 residues: Ribosomal RNA small subunit methyltransferase G (192 aa).

S-adenosyl-L-methionine contacts are provided by residues glycine 59, 111-112 (IE), and arginine 124.

It belongs to the methyltransferase superfamily. RNA methyltransferase RsmG family.

It localises to the cytoplasm. Functionally, specifically methylates the N7 position of a guanine in 16S rRNA. The sequence is that of Ribosomal RNA small subunit methyltransferase G from Mycoplasma genitalium (strain ATCC 33530 / DSM 19775 / NCTC 10195 / G37) (Mycoplasmoides genitalium).